We begin with the raw amino-acid sequence, 176 residues long: ATP-dependent protease subunit HslV (176 aa).

T2 is a catalytic residue. A157, C160, and T163 together coordinate Na(+).

The protein belongs to the peptidase T1B family. HslV subfamily. As to quaternary structure, a double ring-shaped homohexamer of HslV is capped on each side by a ring-shaped HslU homohexamer. The assembly of the HslU/HslV complex is dependent on binding of ATP.

Its subcellular location is the cytoplasm. The enzyme catalyses ATP-dependent cleavage of peptide bonds with broad specificity.. With respect to regulation, allosterically activated by HslU binding. Functionally, protease subunit of a proteasome-like degradation complex believed to be a general protein degrading machinery. This chain is ATP-dependent protease subunit HslV, found in Buchnera aphidicola subsp. Acyrthosiphon pisum (strain APS) (Acyrthosiphon pisum symbiotic bacterium).